We begin with the raw amino-acid sequence, 425 residues long: Paired box pox-neuro protein (425 aa).

Residues 5–132 (GQAGVNQLGG…SSINRILRNS (128 aa)) constitute a DNA-binding region (paired). The interval 8–64 (GVNQLGGVFVNGRPLPDCVRRRIVDLALCGVRPCDISRQLLVSHGCVSKILTRFYET) is PAI subdomain. The RED subdomain stretch occupies residues 84–132 (TVVKKIIRLKEENSGMFAWEIREQLQQQRVCDPSSVPSISSINRILRNS). Disordered regions lie at residues 159 to 188 (QAGS…AATP), 297 to 358 (TKSE…RKRN), and 383 to 425 (LESS…EVVN). Pro residues predominate over residues 172 to 185 (APPPPVTVAPPTPA). Low complexity-rich tracts occupy residues 323–332 (SSPAALSLTA) and 340–349 (GSAPEASPGS). A compositionally biased stretch (acidic residues) spans 402–425 (TPEDEDPAEAEEEQEEEDSVEVVN).

Central and peripheral nervous systems.

The protein localises to the nucleus. Its function is as follows. Transcriptional regulator that specifies poly-innervated organs (chemosensory bristle). Also controls the number of neurons. This is Paired box pox-neuro protein (Poxn) from Drosophila melanogaster (Fruit fly).